Consider the following 409-residue polypeptide: Peptidase T (409 aa).

Histidine 78 serves as a coordination point for Zn(2+). Aspartate 80 is a catalytic residue. Aspartate 140 provides a ligand contact to Zn(2+). The active-site Proton acceptor is glutamate 173. Glutamate 174, aspartate 196, and histidine 379 together coordinate Zn(2+).

This sequence belongs to the peptidase M20B family. Zn(2+) serves as cofactor.

It localises to the cytoplasm. The enzyme catalyses Release of the N-terminal residue from a tripeptide.. In terms of biological role, cleaves the N-terminal amino acid of tripeptides. In Salmonella dublin (strain CT_02021853), this protein is Peptidase T.